Reading from the N-terminus, the 393-residue chain is NAD(P)H-quinone oxidoreductase subunit H, chloroplastic (393 aa).

This sequence belongs to the complex I 49 kDa subunit family. In terms of assembly, NDH is composed of at least 16 different subunits, 5 of which are encoded in the nucleus.

It localises to the plastid. The protein resides in the chloroplast thylakoid membrane. It catalyses the reaction a plastoquinone + NADH + (n+1) H(+)(in) = a plastoquinol + NAD(+) + n H(+)(out). The catalysed reaction is a plastoquinone + NADPH + (n+1) H(+)(in) = a plastoquinol + NADP(+) + n H(+)(out). In terms of biological role, NDH shuttles electrons from NAD(P)H:plastoquinone, via FMN and iron-sulfur (Fe-S) centers, to quinones in the photosynthetic chain and possibly in a chloroplast respiratory chain. The immediate electron acceptor for the enzyme in this species is believed to be plastoquinone. Couples the redox reaction to proton translocation, and thus conserves the redox energy in a proton gradient. The protein is NAD(P)H-quinone oxidoreductase subunit H, chloroplastic of Lobularia maritima (Sweet alyssum).